We begin with the raw amino-acid sequence, 174 residues long: Ribosome maturation factor RimM (174 aa).

The PRC barrel domain maps to 97-173; sequence GNKFYFHEVI…DLPVGLVEMY (77 aa).

It belongs to the RimM family. In terms of assembly, binds ribosomal protein uS19.

It localises to the cytoplasm. In terms of biological role, an accessory protein needed during the final step in the assembly of 30S ribosomal subunit, possibly for assembly of the head region. Essential for efficient processing of 16S rRNA. May be needed both before and after RbfA during the maturation of 16S rRNA. It has affinity for free ribosomal 30S subunits but not for 70S ribosomes. The protein is Ribosome maturation factor RimM of Flavobacterium johnsoniae (strain ATCC 17061 / DSM 2064 / JCM 8514 / BCRC 14874 / CCUG 350202 / NBRC 14942 / NCIMB 11054 / UW101) (Cytophaga johnsonae).